A 196-amino-acid polypeptide reads, in one-letter code: uncharacterized protein (196 aa).

The chain crosses the membrane as a helical span at residues 26 to 46 (ITFFFILLICFICILLLLAIF).

It is found in the membrane. This is an uncharacterized protein from Mus musculus (Mouse).